The following is a 154-amino-acid chain: Myoglobin (154 aa).

The Globin domain occupies 1-147 (MADVKKNCLA…FNDECQHQLA (147 aa)). Heme b is bound at residue His96.

This sequence belongs to the globin family.

The protein localises to the cytoplasm. The chain is Myoglobin (GLBB) from Nippostrongylus brasiliensis (Rat hookworm).